We begin with the raw amino-acid sequence, 333 residues long: Ribosomal RNA small subunit methyltransferase C (333 aa).

Belongs to the methyltransferase superfamily. RsmC family. Monomer.

It is found in the cytoplasm. It carries out the reaction guanosine(1207) in 16S rRNA + S-adenosyl-L-methionine = N(2)-methylguanosine(1207) in 16S rRNA + S-adenosyl-L-homocysteine + H(+). Functionally, specifically methylates the guanine in position 1207 of 16S rRNA in the 30S particle. The sequence is that of Ribosomal RNA small subunit methyltransferase C from Mannheimia succiniciproducens (strain KCTC 0769BP / MBEL55E).